The following is a 452-amino-acid chain: AP-4 complex subunit mu-1 (452 aa).

Residues 184–451 (KNEVFLDVVE…LSHSDAYVIR (268 aa)) enclose the MHD domain.

Belongs to the adaptor complexes medium subunit family. In terms of assembly, adaptor protein complex 4 (AP-4) is a heterotetramer composed of two large adaptins (epsilon-type subunit AP4E1 and beta-type subunit AP4B1), a medium adaptin (mu-type subunit AP4M1) and a small adaptin (sigma-type AP4S1). Interacts with tyrosine-based sorting signals on the cytoplasmic tail of cargo proteins such as APP, ATG9A, LAMP2 and NAGPA. Interacts with the C-terminal domain of GRID2. Interacts with GRIA1 and GRIA2; the interaction is indirect via CACNG3. Interacts with CACNG3; CACNG3 associates GRIA1 and GRIA2 with the adaptor protein complex 4 (AP-4) to target them to the somatodendritic compartment of neurons. Interacts with HOOK1 and HOOK2; the interactions are direct, mediate the interaction between FTS-Hook-FHIP (FHF) complex and AP-4 and the perinuclear distribution of AP-4.

The protein localises to the golgi apparatus. The protein resides in the trans-Golgi network membrane. Its subcellular location is the early endosome. In terms of biological role, component of the adaptor protein complex 4 (AP-4). Adaptor protein complexes are vesicle coat components involved both in vesicle formation and cargo selection. They control the vesicular transport of proteins in different trafficking pathways. AP-4 forms a non clathrin-associated coat on vesicles departing the trans-Golgi network (TGN) and may be involved in the targeting of proteins from the trans-Golgi network (TGN) to the endosomal-lysosomal system. It is also involved in protein sorting to the basolateral membrane in epithelial cells and the proper asymmetric localization of somatodendritic proteins in neurons. Within AP-4, the mu-type subunit AP4M1 is directly involved in the recognition and binding of tyrosine-based sorting signals found in the cytoplasmic part of cargos. The adaptor protein complex 4 (AP-4) may also recognize other types of sorting signal. This chain is AP-4 complex subunit mu-1, found in Canis lupus familiaris (Dog).